Consider the following 225-residue polypeptide: Small ribosomal subunit protein uS3 (225 aa).

The KH type-2 domain maps to 18 to 87; sequence VDEYLAKQFY…NPQITVTSVE (70 aa).

It belongs to the universal ribosomal protein uS3 family. Part of the 30S ribosomal subunit.

Its function is as follows. Binds the lower part of the 30S subunit head. This Sulfurisphaera tokodaii (strain DSM 16993 / JCM 10545 / NBRC 100140 / 7) (Sulfolobus tokodaii) protein is Small ribosomal subunit protein uS3.